Consider the following 460-residue polypeptide: V-type ATP synthase beta chain (460 aa).

Belongs to the ATPase alpha/beta chains family.

Functionally, produces ATP from ADP in the presence of a proton gradient across the membrane. The V-type beta chain is a regulatory subunit. This is V-type ATP synthase beta chain from Clostridium novyi (strain NT).